Here is a 509-residue protein sequence, read N- to C-terminus: Probable triacylglyceride transporter ML0556 (509 aa).

A run of 13 helical transmembrane segments spans residues 48–68, 78–98, 112–132, 146–166, 171–191, 203–223, 232–252, 272–292, 309–329, 339–359, 381–403, 410–430, and 477–497; these read RITWIVTMYLLGYIAAMPLLS, LLLQVSLAGFAIGSVMTALAG, IQGVASGALLPITLALGADLW, AAQELGSVLGPLYGIFIVWLF, YVFWINIPLTAIAMLMIQVSL, VDVVGGVLLAIALGLVVIGLY, VLPSYGVPVLVGGIVATVAFA, PFLSALGASVAAGAALMVTLV, AAGLLVWFLIALPIGAVLGGW, MTFVGLLITAGGYWLISHWPV, LLVAGLGLGLVIGPLSSATLRVV, IASAAVVVARMTGMLIGVAAL, and IFMITAIVCVIGALLGLLISS.

It belongs to the major facilitator superfamily.

The protein resides in the cell inner membrane. Functionally, in association with lipoprotein LprG probably transports triacylglycerides (TAG) across the inner cell membrane into the periplasm; TAG probably regulates lipid metabolism and growth regulation. May be an efflux transporter and involved in maintaining correct cell wall permeability. Probably required with LprG for normal surface localization of lipoarabinomannan (LAM). In Mycobacterium leprae (strain TN), this protein is Probable triacylglyceride transporter ML0556.